Reading from the N-terminus, the 995-residue chain is DExH-box ATP-dependent RNA helicase DExH10 (995 aa).

Positions 1–42 (MSAQMEEPETLGKRKESESSKLRSDETPTPEPRTKRRSLKRA) are disordered. At S2 the chain carries N-acetylserine. Basic and acidic residues predominate over residues 10 to 26 (TLGKRKESESSKLRSDE). The 157-residue stretch at 90-246 (VACLERKESI…WICYLHKQPC (157 aa)) folds into the Helicase ATP-binding domain. 103–110 (AHTSAGKT) lines the ATP pocket. Positions 194–197 (DEIH) match the DEIH box motif. The disordered stretch occupies residues 290-318 (DTFPKPKSNDGKKSANGKSGGRGAKGGGG). A compositionally biased stretch (gly residues) spans 307–318 (KSGGRGAKGGGG). The 202-residue stretch at 323 to 524 (DVYKIVKMIM…LSYYTILNLL (202 aa)) folds into the Helicase C-terminal domain.

The protein belongs to the DExH box helicase family. SKI2 subfamily. As to expression, expressed in inflorescences, leaves, stems, and roots.

Its subcellular location is the nucleus. It localises to the nucleoplasm. The enzyme catalyses ATP + H2O = ADP + phosphate + H(+). ATP-dependent RNA helicase that associates with the RNA exosome complex, with the cap binding complex (CBC) and with the NEXT-like complex. Involved in the degradation of a large number of non-coding nuclear exosome substrates such as snoRNA and miRNA precursors, incompletely spliced mRNAs, and spurious transcripts produced from pseudogenes and intergenic regions. Involved in the maintenance of homeotic B and C gene expression in the reproductive whorls. Regulates floral organ spacing and identity, probably through the regulation of protein synthesis or mRNA degradation. This Arabidopsis thaliana (Mouse-ear cress) protein is DExH-box ATP-dependent RNA helicase DExH10.